The chain runs to 228 residues: Phosphoribosylformylglycinamidine synthase subunit PurQ (228 aa).

Positions 4–226 (AVVVFPGSNC…VNYWRETHVV (223 aa)) constitute a Glutamine amidotransferase type-1 domain. Cys-86 serves as the catalytic Nucleophile. Active-site residues include His-195 and Glu-197.

As to quaternary structure, part of the FGAM synthase complex composed of 1 PurL, 1 PurQ and 2 PurS subunits.

Its subcellular location is the cytoplasm. The catalysed reaction is N(2)-formyl-N(1)-(5-phospho-beta-D-ribosyl)glycinamide + L-glutamine + ATP + H2O = 2-formamido-N(1)-(5-O-phospho-beta-D-ribosyl)acetamidine + L-glutamate + ADP + phosphate + H(+). The enzyme catalyses L-glutamine + H2O = L-glutamate + NH4(+). It participates in purine metabolism; IMP biosynthesis via de novo pathway; 5-amino-1-(5-phospho-D-ribosyl)imidazole from N(2)-formyl-N(1)-(5-phospho-D-ribosyl)glycinamide: step 1/2. Its function is as follows. Part of the phosphoribosylformylglycinamidine synthase complex involved in the purines biosynthetic pathway. Catalyzes the ATP-dependent conversion of formylglycinamide ribonucleotide (FGAR) and glutamine to yield formylglycinamidine ribonucleotide (FGAM) and glutamate. The FGAM synthase complex is composed of three subunits. PurQ produces an ammonia molecule by converting glutamine to glutamate. PurL transfers the ammonia molecule to FGAR to form FGAM in an ATP-dependent manner. PurS interacts with PurQ and PurL and is thought to assist in the transfer of the ammonia molecule from PurQ to PurL. The sequence is that of Phosphoribosylformylglycinamidine synthase subunit PurQ from Geobacillus kaustophilus (strain HTA426).